The following is a 337-amino-acid chain: Sorting nexin-15 (337 aa).

Residues 1–130 (MSRQAKDDFL…EFFRGGEVTR (130 aa)) form the PX domain. A 1,2-diacyl-sn-glycero-3-phospho-(1D-myo-inositol-3-phosphate) is bound by residues arginine 51, serine 53, arginine 87, and arginine 96. Position 105 is an omega-N-methylarginine (arginine 105). Positions 133 to 156 (EVSRDLRILPPPLIPTPPPDEARL) are disordered. Residues 141-151 (LPPPLIPTPPP) are compositionally biased toward pro residues. Serine 201 and serine 227 each carry phosphoserine. A disordered region spans residues 244–270 (LDQEPWEPGGQEEEEAEDGEPAPAYLG). Residues 253-263 (GQEEEEAEDGE) are compositionally biased toward acidic residues. Positions 265–337 (APAYLGQATE…RAEMLHTHLP (73 aa)) constitute an MIT domain.

This sequence belongs to the sorting nexin family. As to quaternary structure, homodimer. Interacts with SNX1, SNX2 and SNX4.

It localises to the cytoplasm. The protein localises to the membrane. Its subcellular location is the cytoplasmic vesicle membrane. May be involved in several stages of intracellular trafficking. Overexpression of SNX15 disrupts the normal trafficking of proteins from the plasma membrane to recycling endosomes or the TGN. The polypeptide is Sorting nexin-15 (Snx15) (Mus musculus (Mouse)).